Here is a 1043-residue protein sequence, read N- to C-terminus: Chitin synthase 2 (1043 aa).

The segment covering 1–10 has biased composition (polar residues); sequence MAQESSNMDQ. 2 disordered regions span residues 1 to 133 and 215 to 234; these read MAQE…PRRP and ESDF…ERRG. Over residues 11–21 the composition is skewed to basic and acidic residues; that stretch reads SKSDNVTDNKP. Low complexity predominate over residues 43–58; sequence SASTSSLPTSRPSSSP. 2 stretches are compositionally biased toward polar residues: residues 59–73 and 81–93; these read GQSP…TSDT and VSPT…SRGS. 6 consecutive transmembrane segments (helical) span residues 663-683, 703-723, 738-758, 780-800, 907-927, and 931-951; these read FVSL…FYFI, IFAI…VLSM, MIIY…MVVM, YIIV…FLYL, YMVS…SEAF, and SVGN…LAVF.

This sequence belongs to the chitin synthase family. Class II subfamily.

It is found in the cell membrane. The enzyme catalyses [(1-&gt;4)-N-acetyl-beta-D-glucosaminyl](n) + UDP-N-acetyl-alpha-D-glucosamine = [(1-&gt;4)-N-acetyl-beta-D-glucosaminyl](n+1) + UDP + H(+). In terms of biological role, polymerizes chitin, a structural polymer of the cell wall and septum, by transferring the sugar moiety of UDP-GlcNAc to the non-reducing end of the growing chitin polymer. This chain is Chitin synthase 2 (CHS2), found in Paracoccidioides brasiliensis.